The following is a 126-amino-acid chain: UPF0102 protein Mlg_2205 (126 aa).

It belongs to the UPF0102 family.

The protein is UPF0102 protein Mlg_2205 of Alkalilimnicola ehrlichii (strain ATCC BAA-1101 / DSM 17681 / MLHE-1).